Consider the following 123-residue polypeptide: Large ribosomal subunit protein uL14c (123 aa).

The protein belongs to the universal ribosomal protein uL14 family. In terms of assembly, part of the 50S ribosomal subunit.

Its subcellular location is the plastid. It localises to the chloroplast. Functionally, binds to 23S rRNA. The protein is Large ribosomal subunit protein uL14c of Triticum aestivum (Wheat).